An 82-amino-acid chain; its full sequence is Exodeoxyribonuclease 7 small subunit (82 aa).

It belongs to the XseB family. As to quaternary structure, heterooligomer composed of large and small subunits.

The protein localises to the cytoplasm. It carries out the reaction Exonucleolytic cleavage in either 5'- to 3'- or 3'- to 5'-direction to yield nucleoside 5'-phosphates.. Functionally, bidirectionally degrades single-stranded DNA into large acid-insoluble oligonucleotides, which are then degraded further into small acid-soluble oligonucleotides. This chain is Exodeoxyribonuclease 7 small subunit, found in Coxiella burnetii (strain CbuG_Q212) (Coxiella burnetii (strain Q212)).